The primary structure comprises 240 residues: Ribonuclease PH (240 aa).

Phosphate contacts are provided by residues arginine 87 and 125-127 (GTR).

This sequence belongs to the RNase PH family. As to quaternary structure, homohexameric ring arranged as a trimer of dimers.

It carries out the reaction tRNA(n+1) + phosphate = tRNA(n) + a ribonucleoside 5'-diphosphate. In terms of biological role, phosphorolytic 3'-5' exoribonuclease that plays an important role in tRNA 3'-end maturation. Removes nucleotide residues following the 3'-CCA terminus of tRNAs; can also add nucleotides to the ends of RNA molecules by using nucleoside diphosphates as substrates, but this may not be physiologically important. Probably plays a role in initiation of 16S rRNA degradation (leading to ribosome degradation) during starvation. The chain is Ribonuclease PH from Pseudomonas putida (strain GB-1).